Here is a 96-residue protein sequence, read N- to C-terminus: Protein RnfH (96 aa).

Belongs to the UPF0125 (RnfH) family.

This Salmonella agona (strain SL483) protein is Protein RnfH.